Consider the following 43-residue polypeptide: uncharacterized protein (43 aa).

This is an uncharacterized protein from Sinorhizobium fredii (strain NBRC 101917 / NGR234).